Reading from the N-terminus, the 553-residue chain is PE cleavage protein A (553 aa).

Residues 1–92 (MSLLVVAPEW…SAGSYSAAEA (92 aa)) enclose the PE domain. D293 is an active-site residue.

This sequence belongs to the mycobacterial PE family. PGRS subfamily. Post-translationally, undergoes auto-proteolytic processing.

The protein localises to the secreted. It is found in the cell surface. In terms of biological role, aspartic protease that processes the lipase LipY and other PE_PGRS proteins. Can also cleave itself. Cleaves LipY both inside the PE domain, before amino acid 98, and after amino acids 136 and 149. Involved in virulence. The chain is PE cleavage protein A from Mycobacterium marinum (strain ATCC BAA-535 / M).